Reading from the N-terminus, the 175-residue chain is MGKITFYEDRGFQGHCYQCSSNNCLQQPYFSRCNSIRVDVHSWFVYQRPDYRGHQYMLQRGNYPQYGQWMGFDDSIRSCRLIPQHTGTFRMRIYERDDFRGQMSEITDDCPSLQDRFHLTEVNSVRVLEGSWVIYEMPSYRGRQYLLRPGEYRRYLDWGAMNAKVGSLRRVMDFY.

Beta/gamma crystallin 'Greek key' domains are found at residues 2–40 (GKITFYEDRGFQGHCYQCSSNNCLQQPYFSRCNSIRVDV) and 41–83 (HSWF…RLIP). The connecting peptide stretch occupies residues 84–88 (QHTGT). Beta/gamma crystallin 'Greek key' domains are found at residues 89–129 (FRMR…RVLE) and 130–172 (GSWV…RRVM).

This sequence belongs to the beta/gamma-crystallin family.

Functionally, crystallins are the dominant structural components of the vertebrate eye lens. This chain is Gamma-crystallin A (CRYGA), found in Bos taurus (Bovine).